A 273-amino-acid chain; its full sequence is Spore development regulator vosA (273 aa).

A compositionally biased stretch (low complexity) spans 66 to 75 (STTQELQSTQ). The interval 66–86 (STTQELQSTQPIAVRQQPRAA) is disordered. Positions 70–253 (ELQSTQPIAV…KEQGCIISIK (184 aa)) constitute a Velvet domain. A Nuclear localization signal motif is present at residues 211-218 (FPTLTEIK). Residues 254 to 267 (KGNERARPRGADGR) are compositionally biased toward basic and acidic residues. Positions 254 to 273 (KGNERARPRGADGRSDDEDD) are disordered.

The protein belongs to the velvet family. VosA subfamily. As to quaternary structure, forms a heterodimeric complex with velB; the formation of the velB-vosA complex is light-dependent.

The protein localises to the nucleus. Its function is as follows. Component of the velB-vosA heterodimeric complex that plays a dual role in activating genes associated with spore maturation and repressing certain development-associated genes. The complex binds DNA through the DNA-binding domain of vosA that recognizes an 11-nucleotide consensus sequence 5'-CTGGCCGCGGC-3' consisting of two motifs in the promoters of key developmental regulatory genes. Positively regulates the expression of wetA and represses abaA and brlA. Acts as a crucial regulator of both conidiation capacity and conidial quality. Responsible for the synthesis and accumulation of intracellular trehalose. In Beauveria bassiana (strain ARSEF 2860) (White muscardine disease fungus), this protein is Spore development regulator vosA.